A 492-amino-acid chain; its full sequence is N-succinylglutamate 5-semialdehyde dehydrogenase (492 aa).

Gly220–Gly225 contributes to the NAD(+) binding site. Active-site residues include Glu243 and Cys277.

It belongs to the aldehyde dehydrogenase family. AstD subfamily.

The catalysed reaction is N-succinyl-L-glutamate 5-semialdehyde + NAD(+) + H2O = N-succinyl-L-glutamate + NADH + 2 H(+). Its pathway is amino-acid degradation; L-arginine degradation via AST pathway; L-glutamate and succinate from L-arginine: step 4/5. Catalyzes the NAD-dependent reduction of succinylglutamate semialdehyde into succinylglutamate. This Salmonella typhi protein is N-succinylglutamate 5-semialdehyde dehydrogenase.